We begin with the raw amino-acid sequence, 623 residues long: Chaperone protein HtpG (623 aa).

An a; substrate-binding region spans residues 1-328 (MTQEKKKFDA…SEDLPLNISR (328 aa)). A b region spans residues 329 to 544 (ESLQHNSILD…ESAMDIRMER (216 aa)). The interval 545-623 (FLIEQKQIAN…DIVQKAILSL (79 aa)) is c.

Belongs to the heat shock protein 90 family. Homodimer.

The protein localises to the cytoplasm. In terms of biological role, molecular chaperone. Has ATPase activity. This Rickettsia canadensis (strain McKiel) protein is Chaperone protein HtpG.